The primary structure comprises 282 residues: Bifunctional protein FolD (282 aa).

Residues 164–166 and S189 contribute to the NADP(+) site; that span reads GRS.

This sequence belongs to the tetrahydrofolate dehydrogenase/cyclohydrolase family. In terms of assembly, homodimer.

The catalysed reaction is (6R)-5,10-methylene-5,6,7,8-tetrahydrofolate + NADP(+) = (6R)-5,10-methenyltetrahydrofolate + NADPH. The enzyme catalyses (6R)-5,10-methenyltetrahydrofolate + H2O = (6R)-10-formyltetrahydrofolate + H(+). The protein operates within one-carbon metabolism; tetrahydrofolate interconversion. In terms of biological role, catalyzes the oxidation of 5,10-methylenetetrahydrofolate to 5,10-methenyltetrahydrofolate and then the hydrolysis of 5,10-methenyltetrahydrofolate to 10-formyltetrahydrofolate. This is Bifunctional protein FolD from Lactobacillus helveticus (strain DPC 4571).